We begin with the raw amino-acid sequence, 228 residues long: UPF0173 metal-dependent hydrolase Smar_0891 (228 aa).

The protein belongs to the UPF0173 family.

The polypeptide is UPF0173 metal-dependent hydrolase Smar_0891 (Staphylothermus marinus (strain ATCC 43588 / DSM 3639 / JCM 9404 / F1)).